Here is a 117-residue protein sequence, read N- to C-terminus: MDKKQARLKRAAKTRHVIRAMGANRLTVHRTPRHIYAQVISPDGGTVLAAASTLESAIRETLPVTGNKDAAIAVGRRIAEKALAVGISSVAFDRSGFKYHGRVKALAEAAREAGLQF.

Belongs to the universal ribosomal protein uL18 family. As to quaternary structure, part of the 50S ribosomal subunit; part of the 5S rRNA/L5/L18/L25 subcomplex. Contacts the 5S and 23S rRNAs.

This is one of the proteins that bind and probably mediate the attachment of the 5S RNA into the large ribosomal subunit, where it forms part of the central protuberance. This Methylococcus capsulatus (strain ATCC 33009 / NCIMB 11132 / Bath) protein is Large ribosomal subunit protein uL18.